We begin with the raw amino-acid sequence, 1441 residues long: ABC transporter G family member 41 (1441 aa).

The segment covering 1–14 has biased composition (basic and acidic residues); the sequence is MEDKKQQQQQQREE. The tract at residues 1 to 28 is disordered; the sequence is MEDKKQQQQQQREEAEAEEEAPVVPSSL. The region spanning 159 to 432 is the ABC transporter 1 domain; that stretch reads ATARGLSRRP…FESCGFKCPE (274 aa). Position 192-199 (192-199) interacts with ATP; sequence GPPGCGKT. In terms of domain architecture, ABC transmembrane type-2 1 spans 510 to 722; that stretch reads DLLKACFARE…AEIGLTGNEF (213 aa). The next 6 membrane-spanning stretches (helical) occupy residues 528 to 548, 566 to 586, 600 to 620, 642 to 662, 672 to 692, and 758 to 778; these read FIYI…GTVF, SLFY…AIAV, FYPA…LSLV, FFCQ…LFRC, ASSV…GFII, and ASAL…GLTI. Residues 838–1090 form the ABC transporter 2 domain; it reads ISFQDVNYYV…NVIHYFETIP (253 aa). 883 to 890 provides a ligand contact to ATP; the sequence is GVTGAGKT. The ABC transmembrane type-2 2 domain occupies 1163-1379; that stretch reads EQLKACIWKQ…TLNVFFTTQF (217 aa). 7 consecutive transmembrane segments (helical) span residues 1187–1207, 1215–1235, 1272–1292, 1300–1320, 1329–1349, 1357–1377, and 1413–1433; these read ILFI…QGDI, GLFT…INNC, IPYV…MIGY, FWFM…GMMI, VASI…GFIV, WWIW…FFTT, and LAAI…GLSI.

It belongs to the ABC transporter superfamily. ABCG family. PDR (TC 3.A.1.205) subfamily.

The protein localises to the membrane. Its function is as follows. May be a general defense protein. This Oryza sativa subsp. japonica (Rice) protein is ABC transporter G family member 41.